The sequence spans 26 residues: Citropin-2.1.3 (26 aa).

As to expression, expressed by the dorsal and submental skin glands.

It is found in the secreted. This chain is Citropin-2.1.3, found in Ranoidea citropa (Australian Blue Mountains tree frog).